Reading from the N-terminus, the 344-residue chain is Serine proteinase inhibitor 2 (344 aa).

Belongs to the serpin family. Poxviruses subfamily.

Its subcellular location is the host cytoplasm. Its function is as follows. Viral serpin that inhibits both cysteine and serine proteinases involved in the regulation of host inflammatory and apoptosis processes. Major anti-apoptotic protein which inhibits both intrinsic and extrinsic pathways and strongly cleaves host CASP1 and CASP8 but is a rather poor inhibitor of host CASP3. Prevents the proteolytic activity of host interleukin-1-beta converting enzyme (ICE) and ICE-like enzymes. Can also block apoptosis through host tumor necrosis factor (TNF) receptor. The inhibition of host ICE is an example of a 'cross-class' interaction, in which a serpin inhibits a non-serine proteinase. Also inhibits granzyme B. In Cynomys gunnisoni (Gunnison's prairie dog), this protein is Serine proteinase inhibitor 2 (OPG199).